A 170-amino-acid polypeptide reads, in one-letter code: MPYPKQMVEPMRKELTQLGVEELRTPDEVDAAFDQAEDETMLLVINSVCGCAAGNARPAVAKAKDATDHHPDRYLTVFAGQDLEATERTREYLAGIPPSSPFFALFRDGQPVYVVERKHIEGRNADVIARDLVEAFEAYCGDEEPPADAPSRPDPSSSGEGLPSTFQSIT.

Residues 140–170 are disordered; that stretch reads CGDEEPPADAPSRPDPSSSGEGLPSTFQSIT.

It belongs to the bacilliredoxin family.

In Salinibacter ruber (strain DSM 13855 / M31), this protein is Bacilliredoxin SRU_1493.